The following is a 443-amino-acid chain: ATP-dependent protease ATPase subunit HslU (443 aa).

Residues Ile18, 60–65, Asp256, Glu321, and Arg393 each bind ATP; that span reads GVGKTE.

It belongs to the ClpX chaperone family. HslU subfamily. In terms of assembly, a double ring-shaped homohexamer of HslV is capped on each side by a ring-shaped HslU homohexamer. The assembly of the HslU/HslV complex is dependent on binding of ATP.

Its subcellular location is the cytoplasm. Its function is as follows. ATPase subunit of a proteasome-like degradation complex; this subunit has chaperone activity. The binding of ATP and its subsequent hydrolysis by HslU are essential for unfolding of protein substrates subsequently hydrolyzed by HslV. HslU recognizes the N-terminal part of its protein substrates and unfolds these before they are guided to HslV for hydrolysis. This chain is ATP-dependent protease ATPase subunit HslU, found in Pasteurella multocida (strain Pm70).